Here is a 234-residue protein sequence, read N- to C-terminus: Pepsin inhibitor Dit33 (234 aa).

Positions 1–17 (MKILFCFVLLAIAALRA) are cleaved as a signal peptide. Cys-135 and Cys-230 are disulfide-bonded. The disordered stretch occupies residues 200 to 222 (RHETSSQPSDATTISTTTQAPVE). The span at 204-219 (SSQPSDATTISTTTQA) shows a compositional bias: polar residues.

This sequence belongs to the protease inhibitor I33 family.

Its subcellular location is the secreted. Functionally, aspartyl protease inhibitor. The sequence is that of Pepsin inhibitor Dit33 (DIT33) from Dirofilaria immitis (Canine heartworm).